The following is a 134-amino-acid chain: Prefoldin subunit alpha (134 aa).

It belongs to the prefoldin subunit alpha family. Heterohexamer of two alpha and four beta subunits.

It is found in the cytoplasm. Molecular chaperone capable of stabilizing a range of proteins. Seems to fulfill an ATP-independent, HSP70-like function in archaeal de novo protein folding. This chain is Prefoldin subunit alpha, found in Pyrobaculum calidifontis (strain DSM 21063 / JCM 11548 / VA1).